A 330-amino-acid polypeptide reads, in one-letter code: 2-methoxy-6-polyprenyl-1,4-benzoquinol methylase, mitochondrial (330 aa).

The N-terminal 42 residues, 1–42, are a transit peptide targeting the mitochondrion; that stretch reads MAAPRSWALWSFCGCGWSRAVSGCRLPGLRSSSPRGPLGARL. S-adenosyl-L-methionine is bound by residues Thr-117, Asp-171, and 199-200; that span reads DA.

Belongs to the class I-like SAM-binding methyltransferase superfamily. MenG/UbiE family. As to quaternary structure, component of a multi-subunit COQ enzyme complex, composed of at least COQ3, COQ4, COQ5, COQ6, COQ7 and COQ9. Interacts with PYURF; the interaction is direct, stabilizes COQ5 protein and associates PYURF with COQ enzyme complex.

It localises to the mitochondrion inner membrane. It catalyses the reaction 2-methoxy-6-(all-trans-decaprenyl)benzene-1,4-diol + S-adenosyl-L-methionine = 5-methoxy-2-methyl-3-(all-trans-decaprenyl)benzene-1,4-diol + S-adenosyl-L-homocysteine + H(+). The protein operates within cofactor biosynthesis; ubiquinone biosynthesis. Its function is as follows. Methyltransferase required for the conversion of 2-decaprenyl-6-methoxy-1,4-benzoquinol (DDMQH2) to 2-decaprenyl-3-methyl-6-methoxy-1,4-benzoquinol (DMQH2). The protein is 2-methoxy-6-polyprenyl-1,4-benzoquinol methylase, mitochondrial of Bos taurus (Bovine).